Here is a 481-residue protein sequence, read N- to C-terminus: Argininosuccinate lyase (481 aa).

Belongs to the lyase 1 family. Argininosuccinate lyase subfamily.

The protein localises to the cytoplasm. It catalyses the reaction 2-(N(omega)-L-arginino)succinate = fumarate + L-arginine. It functions in the pathway amino-acid biosynthesis; L-arginine biosynthesis; L-arginine from L-ornithine and carbamoyl phosphate: step 3/3. This Methanococcus maripaludis (strain C6 / ATCC BAA-1332) protein is Argininosuccinate lyase.